The chain runs to 260 residues: Transcription factor BEE 1 (260 aa).

Residues 118-139 (ETGSLRRGKRLKKKKEEEDEKE) form a disordered region. The bHLH domain occupies 151 to 201 (QATDSHSLAERVRRGKINERLRCLQDMVPGCYKAMGMATMLDEIINYVQSL).

It is found in the nucleus. In terms of biological role, positive regulator of brassinosteroid signaling. This chain is Transcription factor BEE 1 (BEE1), found in Arabidopsis thaliana (Mouse-ear cress).